Here is a 160-residue protein sequence, read N- to C-terminus: Type IV major fimbrial protein FimA (160 aa).

The propeptide at 1–7 (MKSLQKG) is leader sequence. Phenylalanine 8 is subject to N-methylphenylalanine. The helical transmembrane segment at 8–28 (FTLIELMIVVAIIGILAAFAI) threads the bilayer. A disulfide bridge links cysteine 63 with cysteine 106.

The protein belongs to the N-Me-Phe pilin family. The pili are polar flexible filaments of about 5.4 nanometers diameter and 2.5 micrometers average length; they consist of only a single polypeptide chain arranged in a helical configuration of five subunits per turn in the assembled pilus.

The protein localises to the fimbrium. The protein resides in the membrane. Its function is as follows. Major component of the type IV fimbriae that plays an essential role in twitching motility, natural transformation, and protease secretion. This Dichelobacter nodosus (Bacteroides nodosus) protein is Type IV major fimbrial protein FimA (fimA).